A 243-amino-acid polypeptide reads, in one-letter code: Ubiquinone/menaquinone biosynthesis C-methyltransferase UbiE (243 aa).

Residues Thr69, Asp90, and 116–117 (DA) contribute to the S-adenosyl-L-methionine site.

The protein belongs to the class I-like SAM-binding methyltransferase superfamily. MenG/UbiE family.

The catalysed reaction is a 2-demethylmenaquinol + S-adenosyl-L-methionine = a menaquinol + S-adenosyl-L-homocysteine + H(+). The enzyme catalyses a 2-methoxy-6-(all-trans-polyprenyl)benzene-1,4-diol + S-adenosyl-L-methionine = a 5-methoxy-2-methyl-3-(all-trans-polyprenyl)benzene-1,4-diol + S-adenosyl-L-homocysteine + H(+). Its pathway is quinol/quinone metabolism; menaquinone biosynthesis; menaquinol from 1,4-dihydroxy-2-naphthoate: step 2/2. It participates in cofactor biosynthesis; ubiquinone biosynthesis. Methyltransferase required for the conversion of demethylmenaquinol (DMKH2) to menaquinol (MKH2) and the conversion of 2-polyprenyl-6-methoxy-1,4-benzoquinol (DDMQH2) to 2-polyprenyl-3-methyl-6-methoxy-1,4-benzoquinol (DMQH2). This Burkholderia multivorans (strain ATCC 17616 / 249) protein is Ubiquinone/menaquinone biosynthesis C-methyltransferase UbiE.